The sequence spans 430 residues: Adenylosuccinate synthetase (430 aa).

GTP contacts are provided by residues 12 to 18 and 40 to 42; these read GDEGKGK and GHT. The Proton acceptor role is filled by D13. Positions 13 and 40 each coordinate Mg(2+). IMP contacts are provided by residues 13 to 16, 38 to 41, T128, R142, Q223, T238, and R302; these read DEGK and NAGH. Residue H41 is the Proton donor of the active site. Residue 298-304 coordinates substrate; sequence TTTGRPR. Residues R304, 330 to 332, and 412 to 414 each bind GTP; these read SID and SVG.

This sequence belongs to the adenylosuccinate synthetase family. Homodimer. The cofactor is Mg(2+).

Its subcellular location is the cytoplasm. The enzyme catalyses IMP + L-aspartate + GTP = N(6)-(1,2-dicarboxyethyl)-AMP + GDP + phosphate + 2 H(+). The protein operates within purine metabolism; AMP biosynthesis via de novo pathway; AMP from IMP: step 1/2. Its function is as follows. Plays an important role in the de novo pathway of purine nucleotide biosynthesis. Catalyzes the first committed step in the biosynthesis of AMP from IMP. This chain is Adenylosuccinate synthetase, found in Streptococcus pyogenes serotype M12 (strain MGAS9429).